Here is a 94-residue protein sequence, read N- to C-terminus: Small ribosomal subunit protein uS19c (94 aa).

This sequence belongs to the universal ribosomal protein uS19 family.

The protein resides in the plastid. The protein localises to the chloroplast. Functionally, protein S19 forms a complex with S13 that binds strongly to the 16S ribosomal RNA. This is Small ribosomal subunit protein uS19c (rps19) from Euglena gracilis.